The chain runs to 156 residues: MRRRKAPVREVLPDPIYGNKVITKFINSLMYDGKKSTATTIMYGALEAIDKKGGEKKGIDIFNDAIENIKPLLEVKSRRVGGATYQVPVEVRPARQQALAIRWIISFARKRSERTMIDKLAAELLDAANSKGASFKKKEDTYKMAEANKAFAHYRW.

The protein belongs to the universal ribosomal protein uS7 family. Part of the 30S ribosomal subunit. Contacts proteins S9 and S11.

One of the primary rRNA binding proteins, it binds directly to 16S rRNA where it nucleates assembly of the head domain of the 30S subunit. Is located at the subunit interface close to the decoding center, probably blocks exit of the E-site tRNA. This chain is Small ribosomal subunit protein uS7, found in Campylobacter jejuni subsp. jejuni serotype O:6 (strain 81116 / NCTC 11828).